Consider the following 475-residue polypeptide: ATP synthase subunit beta, chloroplastic (475 aa).

ATP is bound at residue glycine 155–threonine 162.

The protein belongs to the ATPase alpha/beta chains family. F-type ATPases have 2 components, CF(1) - the catalytic core - and CF(0) - the membrane proton channel. CF(1) has five subunits: alpha(3), beta(3), gamma(1), delta(1), epsilon(1). CF(0) has four main subunits: a(1), b(1), b'(1) and c(9-12).

The protein localises to the plastid. The protein resides in the chloroplast thylakoid membrane. It catalyses the reaction ATP + H2O + 4 H(+)(in) = ADP + phosphate + 5 H(+)(out). Produces ATP from ADP in the presence of a proton gradient across the membrane. The catalytic sites are hosted primarily by the beta subunits. The protein is ATP synthase subunit beta, chloroplastic of Pyropia yezoensis (Susabi-nori).